Consider the following 876-residue polypeptide: Alanine--tRNA ligase (876 aa).

K74 is modified (N6-acetyllysine). 4 residues coordinate Zn(2+): H564, H568, C666, and H670.

It belongs to the class-II aminoacyl-tRNA synthetase family. In terms of assembly, homotetramer. Requires Zn(2+) as cofactor.

The protein localises to the cytoplasm. The enzyme catalyses tRNA(Ala) + L-alanine + ATP = L-alanyl-tRNA(Ala) + AMP + diphosphate. Catalyzes the attachment of alanine to tRNA(Ala) in a two-step reaction: alanine is first activated by ATP to form Ala-AMP and then transferred to the acceptor end of tRNA(Ala). Also edits incorrectly charged Ser-tRNA(Ala) and Gly-tRNA(Ala) via its editing domain. The chain is Alanine--tRNA ligase from Shigella boydii serotype 4 (strain Sb227).